The sequence spans 224 residues: UPF0758 protein CBUD_1789 (224 aa).

The MPN domain maps to 102–224 (QLGCTQDAQQ…SFSFAESGLL (123 aa)). Residues histidine 173, histidine 175, and aspartate 186 each coordinate Zn(2+). The JAMM motif signature appears at 173 to 186 (HNHPSGVPDPSQAD).

Belongs to the UPF0758 family.

The polypeptide is UPF0758 protein CBUD_1789 (Coxiella burnetii (strain Dugway 5J108-111)).